We begin with the raw amino-acid sequence, 154 residues long: Putative protein heh-1 (154 aa).

The N-terminal stretch at 1-15 is a signal peptide; sequence MKTVIFLALLGLAAA. Cystine bridges form between Cys39–Cys50 and Cys97–Cys103.

This sequence belongs to the NPC2 family.

The protein localises to the secreted. The polypeptide is Putative protein heh-1 (heh-1) (Caenorhabditis elegans).